The sequence spans 251 residues: Adenosine 5'-phosphosulfate reductase (251 aa).

4 residues coordinate [4Fe-4S] cluster: C121, C122, C204, and C207. The active-site Nucleophile; cysteine thiosulfonate intermediate is the C232.

The protein belongs to the PAPS reductase family. CysH subfamily. Requires [4Fe-4S] cluster as cofactor.

The protein resides in the cytoplasm. It catalyses the reaction [thioredoxin]-disulfide + sulfite + AMP + 2 H(+) = adenosine 5'-phosphosulfate + [thioredoxin]-dithiol. The protein operates within sulfur metabolism; hydrogen sulfide biosynthesis; sulfite from sulfate. In terms of biological role, catalyzes the formation of sulfite from adenosine 5'-phosphosulfate (APS) using thioredoxin as an electron donor. In Sinorhizobium fredii (strain NBRC 101917 / NGR234), this protein is Adenosine 5'-phosphosulfate reductase.